The following is a 1238-amino-acid chain: ATP-dependent helicase/nuclease subunit A (1238 aa).

The UvrD-like helicase ATP-binding domain occupies 6–474; that stretch reads TKWTETQKSA…IKLSENFRSR (469 aa). 27 to 34 lines the ATP pocket; that stretch reads AGAGTGKT. Residues 512–811 form the UvrD-like helicase C-terminal domain; the sequence is PFEGNCGGDV…RIMSIHKSKG (300 aa).

It belongs to the helicase family. AddA subfamily. In terms of assembly, heterodimer of AddA and AddB/RexB. Requires Mg(2+) as cofactor.

The catalysed reaction is Couples ATP hydrolysis with the unwinding of duplex DNA by translocating in the 3'-5' direction.. It carries out the reaction ATP + H2O = ADP + phosphate + H(+). In terms of biological role, the heterodimer acts as both an ATP-dependent DNA helicase and an ATP-dependent, dual-direction single-stranded exonuclease. Recognizes the chi site generating a DNA molecule suitable for the initiation of homologous recombination. The AddA nuclease domain is required for chi fragment generation; this subunit has the helicase and 3' -&gt; 5' nuclease activities. This is ATP-dependent helicase/nuclease subunit A from Clostridium kluyveri (strain NBRC 12016).